Reading from the N-terminus, the 635-residue chain is Factor of DNA methylation 2 (635 aa).

Residues 289-471 (LDEKKNLHQA…ESMNSVLMTK (183 aa)) are a coiled coil. Basic and acidic residues predominate over residues 350–365 (ELERQKLDEDKRKSDA). The interval 350–376 (ELERQKLDEDKRKSDAMNKSLQLASRE) is disordered.

Forms a complex with IDN2 and FMD1/INDL1. In terms of tissue distribution, highly expressed in flowers and at lower levels in roots, leaves and stems.

Forms a complex with IDN2 and FDM1/IDNL1 that is required for RNA-directed DNA methylation (RdDM) and that functions at a downstream step of the RdDM pathway. The protein is Factor of DNA methylation 2 of Arabidopsis thaliana (Mouse-ear cress).